The sequence spans 951 residues: Valine--tRNA ligase (951 aa).

Positions 42-52 (PNVTGSLHMGH) match the 'HIGH' region motif. The 'KMSKS' region signature appears at 554-558 (KMSKS). Lys557 contributes to the ATP binding site. Residues 882-951 (LIDKDAELAR…EEQKATIAAL (70 aa)) are a coiled coil.

The protein belongs to the class-I aminoacyl-tRNA synthetase family. ValS type 1 subfamily. Monomer.

The protein localises to the cytoplasm. It catalyses the reaction tRNA(Val) + L-valine + ATP = L-valyl-tRNA(Val) + AMP + diphosphate. Functionally, catalyzes the attachment of valine to tRNA(Val). As ValRS can inadvertently accommodate and process structurally similar amino acids such as threonine, to avoid such errors, it has a 'posttransfer' editing activity that hydrolyzes mischarged Thr-tRNA(Val) in a tRNA-dependent manner. This Vibrio vulnificus (strain CMCP6) protein is Valine--tRNA ligase.